Consider the following 536-residue polypeptide: Coilin (536 aa).

The interval 96–316 (AETCNDGAQN…QHSQSPTSDS (221 aa)) is disordered. Over residues 171 to 180 (KTHKGKRTKK) the composition is skewed to basic residues. A compositionally biased stretch (basic and acidic residues) spans 181–192 (KSEAPIENPPDK). A compositionally biased stretch (low complexity) spans 213–238 (QTSSSDSSDTSSCSDQPTPTTQQKPQ). Composition is skewed to polar residues over residues 239–257 (SSAKRQNQAATRESVTHSV) and 303–316 (THIQQHSQSPTSDS). Repeat copies occupy residues 353 to 358 (RGRGRG) and 380 to 385 (RGRGRG). The segment at 353–385 (RGRGRGEDFSWRGQRGRWFRGQGNNSNRGRGRG) is 2 X 6 AA repeats of R-G-R-G-R-G. The segment at 368-387 (GRWFRGQGNNSNRGRGRGDS) is disordered. The segment covering 371-380 (FRGQGNNSNR) has biased composition (low complexity). Residues 425–523 (DYSSLPLLAA…VMLNWNTLIE (99 aa)) enclose the Tudor; atypical domain.

It belongs to the coilin family. In terms of tissue distribution, expressed in both oocytes and somatic cells.

The protein resides in the nucleus. The polypeptide is Coilin (coil) (Xenopus laevis (African clawed frog)).